A 479-amino-acid chain; its full sequence is Calcium uniporter protein, mitochondrial (479 aa).

Residues 1 to 54 constitute a mitochondrion transit peptide; it reads MNHALRRATLGLSPGLRASRLQQSFAKHQIPAVYRCEAASTPLQRAFTTSRCFR. At 55–323 the chain is on the mitochondrial matrix side; that stretch reads QETAAESEKD…DTLAHQGAHR (269 aa). 2 disordered regions span residues 56-125 and 206-238; these read ETAA…KGRL and EADQNEQDGRKDDNKKKDNANVASYSGLGHEGP. Residues 59–79 are a coiled coil; it reads AESEKDDAARREEQSERARKR. A compositionally biased stretch (basic and acidic residues) spans 60-75; that stretch reads ESEKDDAARREEQSER. The span at 83–93 shows a compositional bias: polar residues; that stretch reads NVTSGSSAQTL. Composition is skewed to basic and acidic residues over residues 94–122 and 206–224; these read ENDRPWHRADSGADPDAPKDVPENKDMKK and EADQNEQDGRKDDNKKKDN. A helical transmembrane segment spans residues 324–344; it reads LAQGGFAALAGWWGVVYYVTF. Topologically, residues 345-354 are mitochondrial intermembrane; the sequence is HTQAGWDLVE. Positions 350–358 match the Selectivity filter motif; that stretch reads WDLVEPVTY. A Ca(2+)-binding site is contributed by E354. Residues 355 to 375 traverse the membrane as a helical segment; that stretch reads PVTYLAGLTTVMGAYLWFLYI. At 376-479 the chain is on the mitochondrial matrix side; that stretch reads SRDLSYKAAM…GSSDKIKKKQ (104 aa). Basic and acidic residues predominate over residues 445–462; sequence KVLEEEKQGRDGTKVTEG. Residues 445 to 479 are disordered; sequence KVLEEEKQGRDGTKVTEGKDEDDGPGSSDKIKKKQ.

This sequence belongs to the MCU (TC 1.A.77) family. As to quaternary structure, homotetramer, assembles in a dimer or dimers configuration with two interfaces.

It is found in the mitochondrion inner membrane. The enzyme catalyses Ca(2+)(in) = Ca(2+)(out). In terms of biological role, highly selective calcium channel localized to the inner mitochondrial membrane, which mediates calcium uptake into the mitochondrial matrix. Mitochondrial calcium homeostasis plays key roles in cellular physiology and regulates ATP production, cytoplasmic calcium signals and activation of cell death pathways. Sufficient to operate as a pore-forming channel without the need of calcium-sensor or auxiliary subunit. In Gibberella zeae (strain ATCC MYA-4620 / CBS 123657 / FGSC 9075 / NRRL 31084 / PH-1) (Wheat head blight fungus), this protein is Calcium uniporter protein, mitochondrial.